Reading from the N-terminus, the 216-residue chain is MECSQEDVVNDFIALEKIGSEVDINLDGVIKSKECSNTNEADIISNLITAIEESLSCTSVCTAVSLETVAQKLDAYADPSLNTQMSFSTASDLSSMEQDYVKASDDPFDLNHQPSPLQVWRDQGKITGFQMMCDDQKVTVVDSLECLAQSEQHLEPVYFDPRVNLAIPCPPDDFEILEDYGSTSNASVNSDDASTAELGPTSEEFEEWVRKIEQNY.

The span at 182–193 (STSNASVNSDDA) shows a compositional bias: polar residues. The tract at residues 182–204 (STSNASVNSDDASTAELGPTSEE) is disordered.

This is an uncharacterized protein from Caenorhabditis elegans.